The primary structure comprises 453 residues: MYIQMTDGVPPPPEQSSLDHRIDELERQKEIDDWLPITSSRNAKWWYSTFHNVTAMVGAGVLGLPFFMAQLGWGPGIAVLILSWIITLYTLWQMVEMHEMVPGKRFDRYHELGQFAFGERLGLYIIVPQQIIVEVGVCIVYMVTGGQSLKKFHEIACQDCSPIRLSFFIMIFASSHFVLSHLPNFNSISGVSLVAAVMSLSYSTIAWTATAAKGVQEDVQYGYKSGTTASTVLSFFTGLGGIAFAYAGHNVVLEIQATIPSTPSNPSKGPMWRGVVVAYVVVALCYFPVALVGYGVFGNAVLDNVLMSLETPVWAIATANLFVVMHVIGSYQIFAMPVFDMVETFLVKKLNFKPSTVLRFIVRNVYVALTMFIGIMIPFFGGLLAFFGGFAFAPTSYFLPCIMWLLIYKPKRFSLSWWTNWVCIVLGVVLMILSSIGGLRQIIIQSKDYSFFS.

The Cytoplasmic portion of the chain corresponds to 1–44; that stretch reads MYIQMTDGVPPPPEQSSLDHRIDELERQKEIDDWLPITSSRNAK. Helical transmembrane passes span 45–65 and 66–86; these read WWYS…LGLP and FFMA…SWII. Residues 87 to 122 are Cytoplasmic-facing; it reads TLYTLWQMVEMHEMVPGKRFDRYHELGQFAFGERLG. Residues 123–143 traverse the membrane as a helical segment; it reads LYIIVPQQIIVEVGVCIVYMV. Residues 144–164 lie on the Extracellular side of the membrane; it reads TGGQSLKKFHEIACQDCSPIR. The helical transmembrane segment at 165-185 threads the bilayer; the sequence is LSFFIMIFASSHFVLSHLPNF. The Cytoplasmic segment spans residues 186–187; sequence NS. The chain crosses the membrane as a helical span at residues 188 to 208; the sequence is ISGVSLVAAVMSLSYSTIAWT. Residues 209 to 231 lie on the Extracellular side of the membrane; that stretch reads ATAAKGVQEDVQYGYKSGTTAST. The helical transmembrane segment at 232 to 252 threads the bilayer; sequence VLSFFTGLGGIAFAYAGHNVV. Topologically, residues 253–276 are cytoplasmic; the sequence is LEIQATIPSTPSNPSKGPMWRGVV. Residues 277–297 traverse the membrane as a helical segment; that stretch reads VAYVVVALCYFPVALVGYGVF. The Extracellular segment spans residues 298 to 318; the sequence is GNAVLDNVLMSLETPVWAIAT. The helical transmembrane segment at 319–339 threads the bilayer; the sequence is ANLFVVMHVIGSYQIFAMPVF. Residues 340 to 359 lie on the Cytoplasmic side of the membrane; it reads DMVETFLVKKLNFKPSTVLR. A helical transmembrane segment spans residues 360–382; it reads FIVRNVYVALTMFIGIMIPFFGG. Residues 383–385 are Extracellular-facing; the sequence is LLA. Residues 386–408 traverse the membrane as a helical segment; that stretch reads FFGGFAFAPTSYFLPCIMWLLIY. The Cytoplasmic segment spans residues 409–412; it reads KPKR. Residues 413 to 433 form a helical membrane-spanning segment; it reads FSLSWWTNWVCIVLGVVLMIL. At 434–453 the chain is on the extracellular side; the sequence is SSIGGLRQIIIQSKDYSFFS.

This sequence belongs to the amino acid/polyamine transporter 2 family. Amino acid/auxin permease (AAAP) (TC 2.A.18.2) subfamily.

The protein localises to the cell membrane. Its function is as follows. Amino acid transporter. This Arabidopsis thaliana (Mouse-ear cress) protein is Lysine histidine transporter-like 1.